Consider the following 532-residue polypeptide: BTB/POZ domain-containing protein 3 (532 aa).

The interval 23–54 (KNRSKKSSKKTNTGGGGGGSSSSSSSSSNSKL) is disordered. A compositionally biased stretch (low complexity) spans 43–53 (SSSSSSSSNSK). Residues 130 to 200 (ADVHFVVGPP…IYCDEIDLAA (71 aa)) enclose the BTB domain. Positions 245 to 310 (FEEPDLTQRC…NWAEVECQRQ (66 aa)) constitute a BACK domain.

In terms of tissue distribution, expressed in visual cortex. Expressed in visual cortex layer IV neurons.

The protein resides in the cytoplasm. It is found in the cytosol. The protein localises to the nucleus. Acts as a key regulator of dendritic field orientation during development of sensory cortex. Also directs dendrites toward active axon terminals when ectopically expressed. The protein is BTB/POZ domain-containing protein 3 (BTBD3) of Mustela putorius furo (European domestic ferret).